Here is a 414-residue protein sequence, read N- to C-terminus: Alanine--glyoxylate aminotransferase (414 aa).

The N-terminal 23 residues, 1–23 (MFRALARASATLGPQVAGWARTM), are a transit peptide targeting the mitochondrion. At lysine 231 the chain carries N6-(pyridoxal phosphate)lysine. Residue lysine 247 is modified to N6-acetyllysine; alternate. Lysine 247 is modified (N6-succinyllysine; alternate). Residues lysine 256 and lysine 334 each carry the N6-acetyllysine modification. Residue arginine 382 participates in substrate binding. Residues 412 to 414 (NKL) carry the Microbody targeting signal motif.

This sequence belongs to the class-V pyridoxal-phosphate-dependent aminotransferase family. In terms of assembly, homodimer. It depends on pyridoxal 5'-phosphate as a cofactor.

It localises to the peroxisome. Its subcellular location is the mitochondrion matrix. The catalysed reaction is L-serine + pyruvate = 3-hydroxypyruvate + L-alanine. It carries out the reaction glyoxylate + L-alanine = glycine + pyruvate. Catalyzes the transamination of glyoxylate to glycine and contributes to the glyoxylate detoxification. Functionally, catalyzes the transamination between L-serine and pyruvate and contributes to gluconeogenesis from the L-serine metabolism. This chain is Alanine--glyoxylate aminotransferase, found in Felis catus (Cat).